The primary structure comprises 273 residues: Putative pyruvate, phosphate dikinase regulatory protein 2 (273 aa).

151–158 (GVSRTSKT) contributes to the ADP binding site.

It belongs to the pyruvate, phosphate/water dikinase regulatory protein family. PDRP subfamily.

The enzyme catalyses N(tele)-phospho-L-histidyl/L-threonyl-[pyruvate, phosphate dikinase] + ADP = N(tele)-phospho-L-histidyl/O-phospho-L-threonyl-[pyruvate, phosphate dikinase] + AMP + H(+). It catalyses the reaction N(tele)-phospho-L-histidyl/O-phospho-L-threonyl-[pyruvate, phosphate dikinase] + phosphate + H(+) = N(tele)-phospho-L-histidyl/L-threonyl-[pyruvate, phosphate dikinase] + diphosphate. Its function is as follows. Bifunctional serine/threonine kinase and phosphorylase involved in the regulation of the pyruvate, phosphate dikinase (PPDK) by catalyzing its phosphorylation/dephosphorylation. This chain is Putative pyruvate, phosphate dikinase regulatory protein 2, found in Syntrophomonas wolfei subsp. wolfei (strain DSM 2245B / Goettingen).